We begin with the raw amino-acid sequence, 739 residues long: Phosphoribosylformylglycinamidine synthase subunit PurL (739 aa).

His-53 is an active-site residue. ATP contacts are provided by Tyr-56 and Lys-95. Glu-97 lines the Mg(2+) pocket. Residues 98-101 (SHNH) and Arg-120 each bind substrate. The active-site Proton acceptor is His-99. Asp-121 provides a ligand contact to Mg(2+). Gln-244 contributes to the substrate binding site. Residue Asp-274 participates in Mg(2+) binding. 318-320 (ESQ) serves as a coordination point for substrate. Residues Asp-501 and Gly-538 each contribute to the ATP site. Asn-539 lines the Mg(2+) pocket. A substrate-binding site is contributed by Ser-541.

It belongs to the FGAMS family. Monomer. Part of the FGAM synthase complex composed of 1 PurL, 1 PurQ and 2 PurS subunits.

It localises to the cytoplasm. The enzyme catalyses N(2)-formyl-N(1)-(5-phospho-beta-D-ribosyl)glycinamide + L-glutamine + ATP + H2O = 2-formamido-N(1)-(5-O-phospho-beta-D-ribosyl)acetamidine + L-glutamate + ADP + phosphate + H(+). It functions in the pathway purine metabolism; IMP biosynthesis via de novo pathway; 5-amino-1-(5-phospho-D-ribosyl)imidazole from N(2)-formyl-N(1)-(5-phospho-D-ribosyl)glycinamide: step 1/2. Its function is as follows. Part of the phosphoribosylformylglycinamidine synthase complex involved in the purines biosynthetic pathway. Catalyzes the ATP-dependent conversion of formylglycinamide ribonucleotide (FGAR) and glutamine to yield formylglycinamidine ribonucleotide (FGAM) and glutamate. The FGAM synthase complex is composed of three subunits. PurQ produces an ammonia molecule by converting glutamine to glutamate. PurL transfers the ammonia molecule to FGAR to form FGAM in an ATP-dependent manner. PurS interacts with PurQ and PurL and is thought to assist in the transfer of the ammonia molecule from PurQ to PurL. The protein is Phosphoribosylformylglycinamidine synthase subunit PurL of Listeria monocytogenes serotype 4b (strain F2365).